A 295-amino-acid polypeptide reads, in one-letter code: Delta-1-pyrroline-5-carboxylate reductase apf3 (295 aa).

It belongs to the pyrroline-5-carboxylate reductase family.

The protein operates within secondary metabolite biosynthesis. In terms of biological role, delta-1-pyrroline-5-carboxylate reductase; part of the gene cluster that mediates the biosynthesis of the cyclic tetrapeptide apicidin F (APF). The non-ribosomal peptide synthetase apf1 incorporates four different amino acids to produce apicidin F: L-phenylalanine, D-pipecolic acid (D-pip), N-methoxy-L-tryptophan and L-2-aminooctanedioic acid. L-Phenylalanine is the only proteinogenic amino acid directly used by apf1. The 3 other apf1 substrates are non-proteinogenic and have to be modified by other enzymes of the cluster. Lysine is converted to delta-1-pyrroline-5-carboxylate (P5C) which is reduced to L-pipecolic acid (L-pip) by apf3. L-pip is epimerized to D-pip, probably by apf1 activity, prior to incorporation. L-Tryptophan is N-oxidyzed by one of the cytochrome P450 monooxygenases (apf7 or apf8), and further methylated at the hydroxy group by the O-methyltransferase apf6 to yield N-methoxy-L-tryptophan. The synthesis of the fourth apf1 substrate is more complex. The fatty acid synthase apf5 is involved in the synthesis of the octanoic acid backbone of L-2-aminooctanedioic acid by fixing one acetyl-CoA unit and three malonyl-CoA units. Then one of the cytochrome P450 monooxygenases (apf7 or apf8) may oxidize this backbone to 2-oxooctanoic acid. The aminotransferase apf4 is predicted to catalyze the exchange of the keto group with an amino group. The next step would be the oxidation of 2-aminooctanoic acid by one of the cytochrome P450 monooxygenases (apf7 or apf8). The last step is the oxidation of 2-amino-8-hydroxyoctanoic acid to 2-aminooctanedioic acid is catalyzed by the FAD-dependent monooxygenase apf9. The polypeptide is Delta-1-pyrroline-5-carboxylate reductase apf3 (Gibberella fujikuroi (strain CBS 195.34 / IMI 58289 / NRRL A-6831) (Bakanae and foot rot disease fungus)).